The chain runs to 198 residues: Glycerol-3-phosphate acyltransferase (198 aa).

5 helical membrane-spanning segments follow: residues 10-30 (LIPI…WILV), 57-77 (GISF…ILIL), 86-106 (IMYL…WFLF), 118-138 (VVLS…AVVF), and 160-180 (AVTE…IVLI).

Belongs to the PlsY family. Probably interacts with PlsX.

It localises to the cell inner membrane. It carries out the reaction an acyl phosphate + sn-glycerol 3-phosphate = a 1-acyl-sn-glycero-3-phosphate + phosphate. It participates in lipid metabolism; phospholipid metabolism. Its function is as follows. Catalyzes the transfer of an acyl group from acyl-phosphate (acyl-PO(4)) to glycerol-3-phosphate (G3P) to form lysophosphatidic acid (LPA). This enzyme utilizes acyl-phosphate as fatty acyl donor, but not acyl-CoA or acyl-ACP. This chain is Glycerol-3-phosphate acyltransferase, found in Anaplasma marginale (strain Florida).